The primary structure comprises 182 residues: Small ribosomal subunit protein uS4c (182 aa).

The 62-residue stretch at 82–143 (MRLDNILFRL…KQRSKALIQN (62 aa)) folds into the S4 RNA-binding domain.

It belongs to the universal ribosomal protein uS4 family. As to quaternary structure, part of the 30S ribosomal subunit. Contacts protein S5. The interaction surface between S4 and S5 is involved in control of translational fidelity.

Its subcellular location is the plastid. It is found in the chloroplast. One of the primary rRNA binding proteins, it binds directly to 16S rRNA where it nucleates assembly of the body of the 30S subunit. Functionally, with S5 and S12 plays an important role in translational accuracy. This Libertia formosa (Snowy mermaid) protein is Small ribosomal subunit protein uS4c (rps4).